An 87-amino-acid chain; its full sequence is Dynein light chain 1, cytoplasmic (87 aa).

The protein belongs to the dynein light chain family. As to quaternary structure, homodimer. Cytoplasmic dynein consists of two catalytic heavy chains (HCs) and a number of non-catalytic subunits which present intermediate chains (ICs), light intermediate chains (LICs) and light chains (LCs). Component of the nuclear pore complex (NPC). NPC constitutes the exclusive means of nucleocytoplasmic transport. NPCs allow the passive diffusion of ions and small molecules and the active, nuclear transport receptor-mediated bidirectional transport of macromolecules such as proteins, RNAs, ribonucleoparticles (RNPs), and ribosomal subunits across the nuclear envelope. Due to its 8-fold rotational symmetry, all subunits are present with 8 copies or multiples thereof.

It localises to the cytoplasm. The protein localises to the cytoskeleton. Its subcellular location is the nucleus. It is found in the nuclear pore complex. Functionally, acts as one of several non-catalytic accessory components of the cytoplasmic dynein complex that are thought to be involved in linking dynein to cargos and to adapter proteins that regulate dynein function. Cytoplasmic dynein 1 acts as a motor for the intracellular retrograde motility of vesicles and organelles along microtubules. May play a role in changing or maintaining the spatial distribution of cytoskeletal structures. Also a component of the nuclear pore complex. The sequence is that of Dynein light chain 1, cytoplasmic (DYN2) from Kluyveromyces lactis (strain ATCC 8585 / CBS 2359 / DSM 70799 / NBRC 1267 / NRRL Y-1140 / WM37) (Yeast).